The sequence spans 316 residues: Ribonuclease Z (316 aa).

Zn(2+)-binding residues include His59, His61, Asp63, His64, His135, Asp203, and His261. Asp63 functions as the Proton acceptor in the catalytic mechanism.

This sequence belongs to the RNase Z family. In terms of assembly, homodimer. Zn(2+) serves as cofactor.

The enzyme catalyses Endonucleolytic cleavage of RNA, removing extra 3' nucleotides from tRNA precursor, generating 3' termini of tRNAs. A 3'-hydroxy group is left at the tRNA terminus and a 5'-phosphoryl group is left at the trailer molecule.. Zinc phosphodiesterase, which displays some tRNA 3'-processing endonuclease activity. Probably involved in tRNA maturation, by removing a 3'-trailer from precursor tRNA. The polypeptide is Ribonuclease Z (Nanoarchaeum equitans (strain Kin4-M)).